Here is a 433-residue protein sequence, read N- to C-terminus: Serine hydroxymethyltransferase (433 aa).

(6S)-5,6,7,8-tetrahydrofolate-binding positions include Leu133 and 137–139; that span reads GHL. Lys242 is subject to N6-(pyridoxal phosphate)lysine. (6S)-5,6,7,8-tetrahydrofolate is bound at residue 366 to 368; it reads SPF.

Belongs to the SHMT family. In terms of assembly, homodimer. The cofactor is pyridoxal 5'-phosphate.

It localises to the cytoplasm. The enzyme catalyses (6R)-5,10-methylene-5,6,7,8-tetrahydrofolate + glycine + H2O = (6S)-5,6,7,8-tetrahydrofolate + L-serine. Its pathway is one-carbon metabolism; tetrahydrofolate interconversion. The protein operates within amino-acid biosynthesis; glycine biosynthesis; glycine from L-serine: step 1/1. Its function is as follows. Catalyzes the reversible interconversion of serine and glycine with tetrahydrofolate (THF) serving as the one-carbon carrier. This reaction serves as the major source of one-carbon groups required for the biosynthesis of purines, thymidylate, methionine, and other important biomolecules. Also exhibits THF-independent aldolase activity toward beta-hydroxyamino acids, producing glycine and aldehydes, via a retro-aldol mechanism. In Beijerinckia indica subsp. indica (strain ATCC 9039 / DSM 1715 / NCIMB 8712), this protein is Serine hydroxymethyltransferase.